A 130-amino-acid chain; its full sequence is MSVVPKDLKYSREHEWIKVDGNIGIIGITDFAQKSLGDIVFIELPGVGDEISAGDSFGVVESVKAASDLYAPVSGKVVEVNEEVIESPQLVNEDPYGKGWMIKVEISNEAELDELLSPEDYEKLLEEEGE.

The region spanning 23–105 (IGIIGITDFA…YGKGWMIKVE (83 aa)) is the Lipoyl-binding domain. Residue lysine 64 is modified to N6-lipoyllysine.

This sequence belongs to the GcvH family. The glycine cleavage system is composed of four proteins: P, T, L and H. The cofactor is (R)-lipoate.

The glycine cleavage system catalyzes the degradation of glycine. The H protein shuttles the methylamine group of glycine from the P protein to the T protein. This Carboxydothermus hydrogenoformans (strain ATCC BAA-161 / DSM 6008 / Z-2901) protein is Glycine cleavage system H protein.